The following is a 1033-amino-acid chain: Isoleucine--tRNA ligase 2 (1033 aa).

The short motif at 47 to 57 is the 'HIGH' region element; the sequence is PTANGLPHVGH. The 'KMSKS' region signature appears at 590–594; that stretch reads KMSKS. Lys-593 serves as a coordination point for ATP.

This sequence belongs to the class-I aminoacyl-tRNA synthetase family. IleS type 2 subfamily. In terms of assembly, monomer. Zn(2+) is required as a cofactor.

Its subcellular location is the cytoplasm. The enzyme catalyses tRNA(Ile) + L-isoleucine + ATP = L-isoleucyl-tRNA(Ile) + AMP + diphosphate. In terms of biological role, catalyzes the attachment of isoleucine to tRNA(Ile). As IleRS can inadvertently accommodate and process structurally similar amino acids such as valine, to avoid such errors it has two additional distinct tRNA(Ile)-dependent editing activities. One activity is designated as 'pretransfer' editing and involves the hydrolysis of activated Val-AMP. The other activity is designated 'posttransfer' editing and involves deacylation of mischarged Val-tRNA(Ile). The protein is Isoleucine--tRNA ligase 2 of Bacillus anthracis.